Here is an 806-residue protein sequence, read N- to C-terminus: Volume-regulated anion channel subunit LRRC8E (806 aa).

At 1–22 (MIPVAEFKQFTEQQPAFKVLKP) the chain is on the cytoplasmic side. Residues 23-43 (WWDVLAEYITYAMLMIGVFGC) form a helical membrane-spanning segment. Over 44–130 (TLQVTQDKII…YETALHWYAK (87 aa)) the chain is Extracellular. The cysteines at positions 54 and 311 are disulfide-linked. Residues Asn-57 and Asn-80 are each glycosylated (N-linked (GlcNAc...) asparagine). The segment covering 72-81 (YDQQSPPSND) has biased composition (polar residues). The disordered stretch occupies residues 72–103 (YDQQSPPSNDSDLETTIPPPTATSSPPREMSG). A helical transmembrane segment spans residues 131 to 151 (YFPYLVVIHTLIFIICGNFWF). At 152 to 275 (KFPGTSSKIE…MRQTVLKVCK (124 aa)) the chain is on the cytoplasmic side. Positions 182–213 (EVSGESSQEKPSQERSIDRELSKPNFEEGSPA) are disordered. Over residues 188 to 207 (SQEKPSQERSIDRELSKPNF) the composition is skewed to basic and acidic residues. A helical transmembrane segment spans residues 276-296 (FVLITIYNAVLVGKIHFIVPC). At 297–323 (SVHTEDMTGYNSFCCNHTKAHLFSKLA) the chain is on the extracellular side. Asn-312 carries an N-linked (GlcNAc...) asparagine glycan. A helical membrane pass occupies residues 324–344 (ITYLCFLGVYGLTCLYTLYWL). The Cytoplasmic segment spans residues 345–806 (FRRPLKEYSF…VEVRDKLKED (462 aa)). LRR repeat units follow at residues 544-566 (LKSLKVLTIKSNLSKIPATVADV), 569-589 (HLQKFSIHNDGTKLLTLNALK), 593-614 (LVKELELVRCELERIPHAVFSL), 616-637 (NLQVLDLKENTLHTIEEIISLQ), 641-662 (KLSVLRLWHNQIAYIPEHIRKL), 664-685 (GLEELSLNRNKILVIPSQLFLC), 687-708 (KLRHLDLSNNEIRELPPEIGVL), 710-731 (LLQYLGLSGNFLEDLPNELFFC), 733-754 (KLKTLKLGQNRLGNLSPKVGSL), and 756-777 (CLVKLELKGNRMDTLPPELGNC).

The protein belongs to the LRRC8 family. In terms of assembly, heterohexamer; oligomerizes with other LRRC8 proteins (lrrc8a, lrrc8c, lrrc8d and/or lrrc8b) to form a heterohexamer. Detected in a channel complex that contains lrrc8a, lrrc8c and lrrc8e. In vivo, the subunit composition may depend primarily on expression levels, and heterooligomeric channels containing various proportions of the different LRRC8 proteins may coexist.

It is found in the cell membrane. Its subcellular location is the endoplasmic reticulum membrane. It localises to the lysosome membrane. The enzyme catalyses chloride(in) = chloride(out). The catalysed reaction is iodide(out) = iodide(in). It catalyses the reaction taurine(out) = taurine(in). It carries out the reaction 2',3'-cGAMP(out) = 2',3'-cGAMP(in). In terms of biological role, non-essential component of the volume-regulated anion channel (VRAC, also named VSOAC channel), an anion channel required to maintain a constant cell volume in response to extracellular or intracellular osmotic changes. The VRAC channel conducts iodide better than chloride and can also conduct organic osmolytes like taurine. Mediates efflux of amino acids, such as aspartate, in response to osmotic stress. The VRAC channel also mediates transport of immunoreactive cyclic dinucleotide GMP-AMP (2'-3'-cGAMP), an immune messenger produced in response to DNA virus in the cytosol. Channel activity requires lrrc8a plus at least one other family member (lrrc8b, lrrc8c, lrrc8d or lrrc8e); channel characteristics depend on the precise subunit composition. Also plays a role in lysosome homeostasis by forming functional lysosomal VRAC channels in response to low cytoplasmic ionic strength condition: lysosomal VRAC channels are necessary for the formation of large lysosome-derived vacuoles, which store and then expel excess water to maintain cytosolic water homeostasis. This chain is Volume-regulated anion channel subunit LRRC8E, found in Xenopus tropicalis (Western clawed frog).